Consider the following 291-residue polypeptide: Ribosomal protein L11 methyltransferase (291 aa).

4 residues coordinate S-adenosyl-L-methionine: T136, G159, D181, and N228.

It belongs to the methyltransferase superfamily. PrmA family.

The protein resides in the cytoplasm. It carries out the reaction L-lysyl-[protein] + 3 S-adenosyl-L-methionine = N(6),N(6),N(6)-trimethyl-L-lysyl-[protein] + 3 S-adenosyl-L-homocysteine + 3 H(+). In terms of biological role, methylates ribosomal protein L11. In Rhizobium meliloti (strain 1021) (Ensifer meliloti), this protein is Ribosomal protein L11 methyltransferase.